A 476-amino-acid polypeptide reads, in one-letter code: Protein transport protein Sec61 subunit alpha (476 aa).

Residues Gly-2–Leu-33 lie on the Cytoplasmic side of the membrane. A helical transmembrane segment spans residues Trp-34 to Ile-53. Over Met-54–Leu-76 the chain is Lumenal. The chain crosses the membrane as a helical span at residues Met-77–Gly-96. Over Ala-97 to Lys-117 the chain is Cytoplasmic. The helical transmembrane segment at Leu-118–Gly-138 threads the bilayer. The Lumenal portion of the chain corresponds to Asp-139 to Gly-144. Residues Ala-145 to Leu-165 traverse the membrane as a helical segment. Topologically, residues Asp-166–Gly-172 are cytoplasmic. The chain crosses the membrane as a helical span at residues Tyr-173 to Trp-193. Topologically, residues Lys-194–Pro-240 are lumenal. A helical membrane pass occupies residues Asn-241–Phe-261. Over Arg-262–Asn-288 the chain is Cytoplasmic. The helical transmembrane segment at Ile-289 to Ser-309 threads the bilayer. Residues Thr-310–Val-354 lie on the Lumenal side of the membrane. Residues Leu-355 to Phe-375 form a helical membrane-spanning segment. Topologically, residues Ser-376–Ala-420 are cytoplasmic. The helical transmembrane segment at Ala-421 to Ile-441 threads the bilayer. Over Gly-442–Thr-445 the chain is Lumenal. A helical membrane pass occupies residues Gly-446–Val-462. Over Lys-463–Phe-476 the chain is Cytoplasmic.

It belongs to the SecY/SEC61-alpha family. As to quaternary structure, the SEC61 channel-forming translocon complex consists of channel-forming core components SEC61A1, SEC61B and SEC61G and different auxiliary components such as SEC62 and SEC63. The SEC61 channel associates with the multi-pass translocon (MPT) complex.

The protein resides in the endoplasmic reticulum membrane. Its function is as follows. Component of SEC61 channel-forming translocon complex that mediates transport of signal peptide-containing precursor polypeptides across the endoplasmic reticulum (ER). Forms a ribosome receptor and a gated pore in the ER membrane, both functions required for cotranslational translocation of nascent polypeptides. May cooperate with auxiliary protein SEC62, SEC63 and HSPA5/BiP to enable post-translational transport of small presecretory proteins. The SEC61 channel is also involved in ER membrane insertion of transmembrane proteins: it mediates membrane insertion of the first few transmembrane segments of proteins, while insertion of subsequent transmembrane regions of multi-pass membrane proteins is mediated by the multi-pass translocon (MPT) complex. This is Protein transport protein Sec61 subunit alpha (sec61a) from Bovichtus variegatus (Thornfish).